The sequence spans 610 residues: Propanediol dehydratase-reactivating factor large subunit (610 aa).

11–13 is a binding site for ATP; it reads NSS. Positions 105, 166, and 183 each coordinate Mg(2+). Residues 459-462, 557-558, and Arg591 contribute to the ATP site; these read EEIK and GS.

The protein belongs to the DdrA/PduG family. As to quaternary structure, forms a heterotetramer PduG(2)/PduH(2). It depends on Mg(2+) as a cofactor.

Its subcellular location is the bacterial microcompartment. It catalyses the reaction ATP + H2O = ADP + phosphate + H(+). Its pathway is polyol metabolism; 1,2-propanediol degradation. Large subunit of the propanediol dehydratase-reactivating factor (DDR), which reactivates suicidally inhibited adenosylcobalamin-dependent propanediol dehydratase (diol dehydratase, DDH) found in the bacterial microcompartment (BMC) dedicated to 1,2-propanediol (1,2-PD) degradation. Reactivates inactivated DDH in the presence of ATP, Mg(2+) and free adenosylcobalamin (AdoCbl), by mediating the exchange of the tightly bound damaged cofactor AdoCbl for a free intact one. This subunit contains the adenosine nucleotide binding site. Its function is as follows. The 1,2-PD-specific bacterial microcompartment (BMC) concentrates low levels of 1,2-PD catabolic enzymes, concentrates volatile reaction intermediates thus enhancing pathway flux and keeps the level of toxic, mutagenic propionaldehyde low. The polypeptide is Propanediol dehydratase-reactivating factor large subunit (Salmonella typhimurium (strain LT2 / SGSC1412 / ATCC 700720)).